The sequence spans 298 residues: uncharacterized protein (298 aa).

The HTH lysR-type domain occupies 5–62 (TSLSAMRIFEAAARLGSFRAAAEELNLSPSAVSHAIMRLERDLGVALFERTTRSVSLT). The segment at residues 22 to 42 (FRAAAEELNLSPSAVSHAIMR) is a DNA-binding region (H-T-H motif).

The protein belongs to the LysR transcriptional regulatory family.

This is an uncharacterized protein from Sinorhizobium fredii (strain NBRC 101917 / NGR234).